Reading from the N-terminus, the 93-residue chain is uncharacterized protein (93 aa).

The helical transmembrane segment at 12 to 32 threads the bilayer; the sequence is VVGGLSFWTFSAGLIMIVNAL. The interval 47-66 is disordered; it reads TANANGSDDDNENKNNSYRS.

The protein resides in the cell membrane. This is an uncharacterized protein from Mycoplasma genitalium (strain ATCC 33530 / DSM 19775 / NCTC 10195 / G37) (Mycoplasmoides genitalium).